The chain runs to 227 residues: AN1-type zinc finger protein 3 (227 aa).

The A20-type zinc finger occupies 12–44 (PSLPPRCPCGFWGSSKTMNLCSKCFADFQKKQP). Residues Cys18, Cys20, Cys32, and Cys35 each coordinate Zn(2+). The segment at 41–151 (KKQPDDDSTP…RPEESGRSKQ (111 aa)) is disordered. Low complexity-rich tracts occupy residues 49 to 59 (TPSTSNSQSDL) and 66 to 77 (SDNNNTSVTTPT). 2 stretches are compositionally biased toward polar residues: residues 78-94 (LSPS…VTSP) and 111-127 (ITPT…SESE). The span at 135–148 (RLVENPERPEESGR) shows a compositional bias: basic and acidic residues. The segment at 151 to 200 (QKSRRRCFQCQTKLELVQQELGSCRCGYVFCMLHRLPEQHDCTFDHMGRG) adopts an AN1-type zinc-finger fold. 8 residues coordinate Zn(2+): Cys157, Cys160, Cys174, Cys176, Cys181, His184, His190, and Cys192.

This chain is AN1-type zinc finger protein 3 (Zfand3), found in Rattus norvegicus (Rat).